The primary structure comprises 292 residues: 2,3-dihydroxybenzoate decarboxylase (292 aa).

Cysteine 263 is an active-site residue.

This sequence belongs to the metallo-dependent hydrolases superfamily. Homotetramer.

It catalyses the reaction 2,3-dihydroxybenzoate + H(+) = catechol + CO2. It participates in aromatic compound metabolism; benzoate degradation via hydroxylation. The protein is 2,3-dihydroxybenzoate decarboxylase of Aspergillus niger.